The following is a 392-amino-acid chain: 8-amino-7-oxononanoate synthase (392 aa).

Arginine 26 contributes to the substrate binding site. 113–114 (GY) lines the pyridoxal 5'-phosphate pocket. A substrate-binding site is contributed by histidine 138. Pyridoxal 5'-phosphate is bound by residues serine 186, histidine 214, and threonine 241. Lysine 244 carries the post-translational modification N6-(pyridoxal phosphate)lysine. Position 353 (threonine 353) interacts with substrate.

It belongs to the class-II pyridoxal-phosphate-dependent aminotransferase family. BioF subfamily. As to quaternary structure, homodimer. Pyridoxal 5'-phosphate serves as cofactor.

The enzyme catalyses 6-carboxyhexanoyl-[ACP] + L-alanine + H(+) = (8S)-8-amino-7-oxononanoate + holo-[ACP] + CO2. The protein operates within cofactor biosynthesis; biotin biosynthesis. Functionally, catalyzes the decarboxylative condensation of pimeloyl-[acyl-carrier protein] and L-alanine to produce 8-amino-7-oxononanoate (AON), [acyl-carrier protein], and carbon dioxide. The protein is 8-amino-7-oxononanoate synthase of Maricaulis maris (strain MCS10) (Caulobacter maris).